The following is a 263-amino-acid chain: Putative methyltransferase DDB_G0268948 (263 aa).

Belongs to the methyltransferase superfamily.

In Dictyostelium discoideum (Social amoeba), this protein is Putative methyltransferase DDB_G0268948.